We begin with the raw amino-acid sequence, 457 residues long: ATP synthase subunit beta (457 aa).

147–154 (GGAGVGKT) lines the ATP pocket.

It belongs to the ATPase alpha/beta chains family. F-type ATPases have 2 components, CF(1) - the catalytic core - and CF(0) - the membrane proton channel. CF(1) has five subunits: alpha(3), beta(3), gamma(1), delta(1), epsilon(1). CF(0) has three main subunits: a(1), b(2) and c(9-12). The alpha and beta chains form an alternating ring which encloses part of the gamma chain. CF(1) is attached to CF(0) by a central stalk formed by the gamma and epsilon chains, while a peripheral stalk is formed by the delta and b chains.

The protein resides in the cell inner membrane. It carries out the reaction ATP + H2O + 4 H(+)(in) = ADP + phosphate + 5 H(+)(out). In terms of biological role, produces ATP from ADP in the presence of a proton gradient across the membrane. The catalytic sites are hosted primarily by the beta subunits. The polypeptide is ATP synthase subunit beta (Actinobacillus pleuropneumoniae serotype 3 (strain JL03)).